A 250-amino-acid polypeptide reads, in one-letter code: NAD-dependent protein deacetylase 2 (250 aa).

A Deacetylase sirtuin-type domain is found at 4 to 250; it reads MDSKNLFKKA…LRNIWNLIKS (247 aa). Positions 29, 33, 40, 41, 107, 109, 110, and 125 each coordinate NAD(+). Phenylalanine 40 contributes to the nicotinamide binding site. Residues isoleucine 109 and aspartate 110 each coordinate nicotinamide. Histidine 125 acts as the Proton acceptor in catalysis. Cysteine 133, cysteine 136, cysteine 158, and cysteine 161 together coordinate Zn(2+). NAD(+) contacts are provided by serine 198, serine 199, and asparagine 219.

The protein belongs to the sirtuin family. Class U subfamily. Zn(2+) is required as a cofactor.

Its subcellular location is the cytoplasm. The catalysed reaction is N(6)-acetyl-L-lysyl-[protein] + NAD(+) + H2O = 2''-O-acetyl-ADP-D-ribose + nicotinamide + L-lysyl-[protein]. NAD-dependent protein deacetylase which modulates the activities of several enzymes which are inactive in their acetylated form. The polypeptide is NAD-dependent protein deacetylase 2 (Caldanaerobacter subterraneus subsp. tengcongensis (strain DSM 15242 / JCM 11007 / NBRC 100824 / MB4) (Thermoanaerobacter tengcongensis)).